The primary structure comprises 593 residues: Multidrug resistance-like ATP-binding protein MdlB (593 aa).

Topologically, residues 1–25 are cytoplasmic; sequence MRSFSQLWPTLKRLLAYGSPWRKPL. In terms of domain architecture, ABC transmembrane type-1 spans 25 to 310; the sequence is LGIAVLMMWV…LTTQQAMLQQ (286 aa). A helical membrane pass occupies residues 26–46; sequence GIAVLMMWVAAAAEVSGPLLI. Over 47 to 62 the chain is Periplasmic; that stretch reads SYFIDNMVAKNNLPLK. Residues 63-83 form a helical membrane-spanning segment; the sequence is VVAGLAAAYVGLQLFAAGLHY. The Cytoplasmic segment spans residues 84–140; sequence AQSLLFNRAAVGVVQQLRTDVMDAALRQPLSEFDTQPVGQVISRVTNDTEVIRDLYV. The helical transmembrane segment at 141–161 threads the bilayer; the sequence is TVVATVLRSAALVGAMLVAMF. Residues 162-164 are Periplasmic-facing; it reads SLD. The helical transmembrane segment at 165-185 threads the bilayer; the sequence is WRMALVAIMIFPVVLVVMVIY. The Cytoplasmic segment spans residues 186 to 254; that stretch reads QRYSTPIVRR…LRLDGFLLRP (69 aa). Residues 255 to 275 form a helical membrane-spanning segment; it reads LLSLFSSLILCGLLMLFGFSA. Over 276-278 the chain is Periplasmic; it reads SGT. The chain crosses the membrane as a helical span at residues 279–299; that stretch reads IEVGVLYAFISYLGRLNEPLI. The Cytoplasmic segment spans residues 300 to 593; the sequence is ELTTQQAMLQ…SVREEESLSA (294 aa). The ABC transporter domain maps to 341-574; sequence IEVDNVSFAY…QGRYWQMYQL (234 aa). 374 to 381 contacts ATP; the sequence is GHTGSGKS.

The protein belongs to the ABC transporter superfamily. Drug exporter-2 (TC 3.A.1.117) family.

The protein localises to the cell inner membrane. The enzyme catalyses ATP + H2O + xenobioticSide 1 = ADP + phosphate + xenobioticSide 2.. This is Multidrug resistance-like ATP-binding protein MdlB (mdlB) from Escherichia coli O6:H1 (strain CFT073 / ATCC 700928 / UPEC).